Reading from the N-terminus, the 1499-residue chain is Rho GTPase-activating protein 35 (1499 aa).

Residues 1-266 are has GTPase activity, required for proper localization; the sequence is MMMARKQDVR…IPYFEALKQQ (266 aa). GTP is bound by residues lysine 28, 33–37, leucine 52, serine 56, 95–97, 201–203, and 229–231; these read IGKSC, EQT, KCD, and SAR. FF domains follow at residues 270-327, 368-422, 429-483, and 485-550; these read IATA…HIHR, KLLE…HLEK, RAEM…HQKQ, and IDRA…HIHF. Tyrosine 308 is modified (phosphotyrosine). Serine 589 is modified (phosphoserine). Residues 592-767 enclose the pG1 pseudoGTPase domain; that stretch reads DLNIDRINLV…LLDSKRNLNL (176 aa). Phosphoserine is present on residues serine 770 and serine 773. One can recognise a pG2 pseudoGTPase domain in the interval 783 to 947; it reads RIVMCLMCGD…FKDVVEKKNI (165 aa). Residues serine 970, serine 975, serine 985, and serine 1072 each carry the phosphoserine modification. Tyrosine 1087 is subject to Phosphotyrosine. Tyrosine 1105 carries the post-translational modification Phosphotyrosine; by ABL2 and PTK6. A compositionally biased stretch (polar residues) spans 1124–1141; the sequence is KAQSNGSGNGSDSEMDTS. The disordered stretch occupies residues 1124 to 1148; the sequence is KAQSNGSGNGSDSEMDTSSLERGRK. Phosphoserine occurs at positions 1134, 1142, 1150, 1176, 1179, and 1221. The tract at residues 1177–1207 is disordered; sequence VGSDDELGPIRKKEEDQASQGYKGDNAVIPY. Positions 1213-1236 are required for phospholipid binding and regulation of the substrate preference; the sequence is PRRRNILRSLRRNTKKPKPKPRPS. Phosphothreonine is present on threonine 1226. The residue at position 1236 (serine 1236) is a Phosphoserine. The region spanning 1249-1436 is the Rho-GAP domain; sequence VPLTTVVTPE…LFIQQCPFFF (188 aa). The interval 1446–1499 is disordered; the sequence is GAAPGSPSAMAPTVPFLTSTPATSQPSPPQSPPPTPQSPMQPLLSSQLQAEHTL. The span at 1448 to 1470 shows a compositional bias: low complexity; it reads APGSPSAMAPTVPFLTSTPATSQ. A compositionally biased stretch (pro residues) spans 1471 to 1484; it reads PSPPQSPPPTPQSP. Residues serine 1472 and serine 1476 each carry the phosphoserine modification. The residue at position 1480 (threonine 1480) is a Phosphothreonine. Position 1483 is a phosphoserine (serine 1483). The segment covering 1485-1499 has biased composition (low complexity); sequence MQPLLSSQLQAEHTL.

In terms of assembly, interacts with the general transcription factor GTF2I, the interaction sequesters GTF2I in the cytoplasm. Interacts with RASA1. In terms of processing, phosphorylation of Tyr-1105 by PTK6 promotes the association with RASA1, inactivating RHOA while activating RAS. Phosphorylation at Tyr-308 by PDGFRA inhibits binding to GTF2I. Phosphorylated by PRKCA at Ser-1221 and Thr-1226, induces relocalization from the cytoplasm to regions of plasma membrane ruffling and prevents the binding and substrate specificity regulation by phospholipids. In brain, phosphorylated by FYN and SRC. During focal adhesion formation, phosphorylated by MAPK1 and MAPK3 at the C-terminal region, probably at Ser-1451, Ser-1476, Thr-1480 and Ser-1483. Phosphorylation by MAPK1 and MAPK3 inhibits GAP function and localizes ARGHAP35 away from newly forming focal adhesions and stress fibers in cells spreading on fibronectin. Phosphorylation at Ser-1476 and Thr-1480 by GSK3B requires priming by MAPK and inhibits RhoGAP activity and modulates polarized cell migration. As to expression, expressed in the developing kidneys. Expressed in all regions of the mature nervous system (at protein level). Detected in neutrophils (at protein level).

The protein localises to the cytoplasm. The protein resides in the cytoskeleton. It is found in the cilium basal body. Its subcellular location is the nucleus. It localises to the cell membrane. Functionally, rho GTPase-activating protein (GAP). Binds several acidic phospholipids which inhibits the Rho GAP activity to promote the Rac GAP activity. This binding is inhibited by phosphorylation by PRKCA. Involved in cell differentiation as well as cell adhesion and migration, plays an important role in retinal tissue morphogenesis, neural tube fusion, midline fusion of the cerebral hemispheres and mammary gland branching morphogenesis. Transduces signals from p21-ras to the nucleus, acting via the ras GTPase-activating protein (GAP). Transduces SRC-dependent signals from cell-surface adhesion molecules, such as laminin, to promote neurite outgrowth. Regulates axon outgrowth, guidance and fasciculation. Modulates Rho GTPase-dependent F-actin polymerization, organization and assembly, is involved in polarized cell migration and in the positive regulation of ciliogenesis and cilia elongation. During mammary gland development, is required in both the epithelial and stromal compartments for ductal outgrowth. Represses transcription of the glucocorticoid receptor by binding to the cis-acting regulatory sequence 5'-GAGAAAAGAAACTGGAGAAACTC-3'; this function is however unclear and would need additional experimental evidences. In Mus musculus (Mouse), this protein is Rho GTPase-activating protein 35.